A 208-amino-acid polypeptide reads, in one-letter code: 3-demethoxyubiquinol 3-hydroxylase (208 aa).

Glutamate 57, glutamate 87, histidine 90, glutamate 139, glutamate 171, and histidine 174 together coordinate Fe cation.

It belongs to the COQ7 family. Requires Fe cation as cofactor.

It localises to the cell membrane. It catalyses the reaction a 5-methoxy-2-methyl-3-(all-trans-polyprenyl)benzene-1,4-diol + AH2 + O2 = a 3-demethylubiquinol + A + H2O. Its pathway is cofactor biosynthesis; ubiquinone biosynthesis. Functionally, catalyzes the hydroxylation of 2-nonaprenyl-3-methyl-6-methoxy-1,4-benzoquinol during ubiquinone biosynthesis. The chain is 3-demethoxyubiquinol 3-hydroxylase from Burkholderia pseudomallei (strain 1106a).